Reading from the N-terminus, the 203-residue chain is ATP-dependent Clp protease proteolytic subunit (203 aa).

Ser100 acts as the Nucleophile in catalysis. His125 is an active-site residue.

This sequence belongs to the peptidase S14 family. In terms of assembly, fourteen ClpP subunits assemble into 2 heptameric rings which stack back to back to give a disk-like structure with a central cavity, resembling the structure of eukaryotic proteasomes.

It localises to the cytoplasm. It catalyses the reaction Hydrolysis of proteins to small peptides in the presence of ATP and magnesium. alpha-casein is the usual test substrate. In the absence of ATP, only oligopeptides shorter than five residues are hydrolyzed (such as succinyl-Leu-Tyr-|-NHMec, and Leu-Tyr-Leu-|-Tyr-Trp, in which cleavage of the -Tyr-|-Leu- and -Tyr-|-Trp bonds also occurs).. Its function is as follows. Cleaves peptides in various proteins in a process that requires ATP hydrolysis. Has a chymotrypsin-like activity. Plays a major role in the degradation of misfolded proteins. The polypeptide is ATP-dependent Clp protease proteolytic subunit (Anaeromyxobacter sp. (strain K)).